The sequence spans 3930 residues: Hybrid PKS-NRPS synthetase apdA (3930 aa).

The Ketosynthase family 3 (KS3) domain maps to Gln2–Gly440. Catalysis depends on for beta-ketoacyl synthase activity residues Cys176, His313, and His361. The tract at residues Ile557–Ala879 is malonyl-CoA:ACP transacylase (MAT) domain. The N-terminal hotdog fold stretch occupies residues His948 to Pro1085. A dehydratase (DH) domain region spans residues His948–Pro1251. Residues His948–Glu1252 enclose the PKS/mFAS DH domain. Catalysis depends on His980, which acts as the Proton acceptor; for dehydratase activity. A C-terminal hotdog fold region spans residues Asn1100 to Glu1252. Residue Asp1159 is the Proton donor; for dehydratase activity of the active site. The tract at residues Gln1389–Asp1588 is methyltransferase (MT) domain. The tract at residues Ala2088–Ala2229 is ketoreductase (KR) domain. The 78-residue stretch at Ala2326 to Phe2403 folds into the Carrier 1 domain. Position 2363 is an O-(pantetheine 4'-phosphoryl)serine (Ser2363). Disordered regions lie at residues Val2414–Thr2433 and Asp2444–Asp2494. Over residues Ala2445–Ser2473 the composition is skewed to low complexity. Residues Pro2509–Thr2937 form a condensation (C) domain region. Positions Lys2971–Asp3371 are adenylation (A) (KR) domain. A reductase (RED) domain region spans residues Lys2971 to Asp3371. In terms of domain architecture, Carrier 2 spans Arg3493 to Lys3572. Residue Ser3532 is modified to O-(pantetheine 4'-phosphoryl)serine.

In the C-terminal section; belongs to the NRP synthetase family.

The protein operates within secondary metabolite biosynthesis. In terms of biological role, hybrid PKS-NRPS synthetase; part of the gene cluster that mediates the biosynthesis of aspyridones. The polyketide-amino acid backbone preaspyridone A is first assembled by the PKS-NRPS hybrid apdA. The assembly of preaspyridone A is initiated by loading of malonyl-CoA onto apdA, followed by decarboxylation to yield the acetyl starter unit. The growing polyketide chain then elongates into a tetraketide. The adpA PKS module catalyzes three Claisen condensations, as well as beta-keto processing and methylation. Alpha-methylation step during polyketide synthesis is a prerequisite and a key checkpoint for chain transfer between PKS and NRPS modules. The downstream NRPS module contains the condensation (C), adenylation (A), and thiolation (T) domains and catalyzes the incorporation of tyrosine via the formation of the L-tyrosinyl-thioester and the amide linkage between L-tyrosinyl-thioester and the tetraketide. The bimodular assembly line is terminated with a reductase (R) domain that facilitates formation and release of the tetramic acid product. Because apdA lacks a designated enoylreductase (ER) domain, the required activity is provided the enoyl reductase apdC. ApdC appears to operate with different stereoselectivity in different PKS cycle. Combined with apdC, apdA is proposed to synthesize preaspyridone A via about 20 enzymatic steps. A number of oxidative steps performed successively by the cytochrome P450 monooxygenases apdE and apdB are required for the conversion of preaspyridone A to aspyridone A. The cytochrome P450 monooxygenase apdE is responsible for the oxidative dephenylation of preaspyridone A. Finally, the predicted FAD-dependent monooxygenase apdD and the acyl-CoA dehydrogenase apdG may be involved in the transformation of aspyridone A into aspyridone B. The polypeptide is Hybrid PKS-NRPS synthetase apdA (Emericella nidulans (strain FGSC A4 / ATCC 38163 / CBS 112.46 / NRRL 194 / M139) (Aspergillus nidulans)).